Consider the following 269-residue polypeptide: Ribosomal RNA large subunit methyltransferase E (269 aa).

Positions 58, 60, 78, 96, and 120 each coordinate S-adenosyl-L-methionine. Lys160 (proton acceptor) is an active-site residue. The tract at residues 234-269 (HEKKEGNETSDNDEDNNKNGLMIKKIKELRGKRSKL) is disordered. Basic and acidic residues predominate over residues 258-269 (KIKELRGKRSKL).

It belongs to the class I-like SAM-binding methyltransferase superfamily. RNA methyltransferase RlmE family.

It localises to the cytoplasm. The enzyme catalyses uridine(2552) in 23S rRNA + S-adenosyl-L-methionine = 2'-O-methyluridine(2552) in 23S rRNA + S-adenosyl-L-homocysteine + H(+). Its function is as follows. Specifically methylates the uridine in position 2552 of 23S rRNA at the 2'-O position of the ribose in the fully assembled 50S ribosomal subunit. The sequence is that of Ribosomal RNA large subunit methyltransferase E from Methanococcus aeolicus (strain ATCC BAA-1280 / DSM 17508 / OCM 812 / Nankai-3).